Reading from the N-terminus, the 880-residue chain is Phosphoinositide 3-kinase regulatory subunit 5 (880 aa).

The residue at position 1 (methionine 1) is an N-acetylmethionine. A heterodimerization region spans residues 25–101 (SLSRRSTSWS…TPHFPPDSDL (77 aa)). Disordered regions lie at residues 315-339 (GILG…TDGH), 389-416 (SGYV…GHRR), 454-510 (RRAG…SGDE), and 565-601 (HGTS…TPWE). The segment covering 318–335 (GDDEEEEEEEEEVEEDLE) has biased composition (acidic residues). Residues serine 458 and serine 507 each carry the phosphoserine modification. Residues 571–585 (ACPPPRSQTPSPPTD) show a composition bias toward pro residues. The segment at 653–753 (PILADMLLYY…WSNLEKVCTS (101 aa)) is interaction with beta-gamma G protein dimers.

In terms of assembly, heterodimer of a catalytic subunit (PIK3CG/p120) and a regulatory (PIK3R5a/p101) subunit. Interacts with beta-gamma G protein dimers. As to expression, ubiquitously expressed with high expression in fetal brain compared to adult brain. Abundant expression is observed in cerebellum, cerebral cortex, cerebral meninges, and vermis cerebelli.

It localises to the nucleus. Its subcellular location is the cytoplasm. The protein resides in the cell membrane. Its activity is regulated as follows. Greatly activated by G gamma proteins. Its function is as follows. Regulatory subunit of the PI3K gamma complex. Required for recruitment of the catalytic subunit to the plasma membrane via interaction with beta-gamma G protein dimers. Required for G protein-mediated activation of PIK3CG. This chain is Phosphoinositide 3-kinase regulatory subunit 5 (PIK3R5), found in Homo sapiens (Human).